The chain runs to 212 residues: Ribosomal RNA large subunit methyltransferase E (212 aa).

Residues Gly56, Trp58, Asp78, Asp94, and Asp117 each coordinate S-adenosyl-L-methionine. Lys157 functions as the Proton acceptor in the catalytic mechanism.

This sequence belongs to the class I-like SAM-binding methyltransferase superfamily. RNA methyltransferase RlmE family.

Its subcellular location is the cytoplasm. The catalysed reaction is uridine(2552) in 23S rRNA + S-adenosyl-L-methionine = 2'-O-methyluridine(2552) in 23S rRNA + S-adenosyl-L-homocysteine + H(+). In terms of biological role, specifically methylates the uridine in position 2552 of 23S rRNA at the 2'-O position of the ribose in the fully assembled 50S ribosomal subunit. In Ehrlichia chaffeensis (strain ATCC CRL-10679 / Arkansas), this protein is Ribosomal RNA large subunit methyltransferase E.